Consider the following 262-residue polypeptide: Phosphatidylserine decarboxylase proenzyme (262 aa).

Active-site charge relay system; for autoendoproteolytic cleavage activity residues include aspartate 86, histidine 142, and serine 226. The active-site Schiff-base intermediate with substrate; via pyruvic acid; for decarboxylase activity is the serine 226. Serine 226 carries the pyruvic acid (Ser); by autocatalysis modification.

It belongs to the phosphatidylserine decarboxylase family. PSD-B subfamily. Prokaryotic type I sub-subfamily. As to quaternary structure, heterodimer of a large membrane-associated beta subunit and a small pyruvoyl-containing alpha subunit. Pyruvate is required as a cofactor. In terms of processing, is synthesized initially as an inactive proenzyme. Formation of the active enzyme involves a self-maturation process in which the active site pyruvoyl group is generated from an internal serine residue via an autocatalytic post-translational modification. Two non-identical subunits are generated from the proenzyme in this reaction, and the pyruvate is formed at the N-terminus of the alpha chain, which is derived from the carboxyl end of the proenzyme. The autoendoproteolytic cleavage occurs by a canonical serine protease mechanism, in which the side chain hydroxyl group of the serine supplies its oxygen atom to form the C-terminus of the beta chain, while the remainder of the serine residue undergoes an oxidative deamination to produce ammonia and the pyruvoyl prosthetic group on the alpha chain. During this reaction, the Ser that is part of the protease active site of the proenzyme becomes the pyruvoyl prosthetic group, which constitutes an essential element of the active site of the mature decarboxylase.

The protein resides in the cell membrane. It carries out the reaction a 1,2-diacyl-sn-glycero-3-phospho-L-serine + H(+) = a 1,2-diacyl-sn-glycero-3-phosphoethanolamine + CO2. It participates in phospholipid metabolism; phosphatidylethanolamine biosynthesis; phosphatidylethanolamine from CDP-diacylglycerol: step 2/2. Functionally, catalyzes the formation of phosphatidylethanolamine (PtdEtn) from phosphatidylserine (PtdSer). The polypeptide is Phosphatidylserine decarboxylase proenzyme (Bacillus cereus (strain ATCC 10987 / NRS 248)).